Consider the following 275-residue polypeptide: MTQALQALIDQAWEDRTSLSPKSAPADIREAVANVIGQLDAGTLRVAEKQGKDWIVNQWVKKAVLLSFRLEDNAPMSAGGFAQFYDKVPTKFANWSGDDFAKAGFRVVPPAVARRGSFIAKNAVLMPSYVNIGAYVDEGTMVDTWATVGSCAQIGKNVHLSGGVGIGGVLEPLQANPVIIEDNCFIGARSEVVEGVIVEENSVISMGVYLGQSTKIYDRETGEIHYGRVPAGSVVVAGNLPSKDGKYSLYCAVIVKKVDAQTRAKTSLNDLLRGD.

Substrate-binding residues include Arg-106 and Asp-143.

It belongs to the transferase hexapeptide repeat family. As to quaternary structure, homotrimer.

Its subcellular location is the cytoplasm. The enzyme catalyses (S)-2,3,4,5-tetrahydrodipicolinate + succinyl-CoA + H2O = (S)-2-succinylamino-6-oxoheptanedioate + CoA. The protein operates within amino-acid biosynthesis; L-lysine biosynthesis via DAP pathway; LL-2,6-diaminopimelate from (S)-tetrahydrodipicolinate (succinylase route): step 1/3. The sequence is that of 2,3,4,5-tetrahydropyridine-2,6-dicarboxylate N-succinyltransferase from Cupriavidus pinatubonensis (strain JMP 134 / LMG 1197) (Cupriavidus necator (strain JMP 134)).